We begin with the raw amino-acid sequence, 533 residues long: Multicopper oxidase CueO (533 aa).

A signal peptide (tat-type signal) is located at residues 1-28; it reads MHRRDFLKLTAALGAATSLPLWSRAALA. Plastocyanin-like domains are found at residues 53 to 166, 221 to 290, and 416 to 532; these read QTGS…IDDS, PYPQ…DTRD, and AFNF…FTVS. Residues histidine 102, histidine 104, histidine 142, and histidine 144 each coordinate Cu cation. The Cu cation site is built by histidine 458, histidine 461, histidine 463, histidine 514, cysteine 515, histidine 516, and histidine 520.

Belongs to the multicopper oxidase family. As to quaternary structure, monomer. Cu cation serves as cofactor. In terms of processing, predicted to be exported by the Tat system. The position of the signal peptide cleavage has not been experimentally proven.

Its subcellular location is the periplasm. It catalyses the reaction 4 Cu(+) + O2 + 4 H(+) = 4 Cu(2+) + 2 H2O. Multicopper oxidase involved in copper homeostasis and copper tolerance under aerobic conditions. Is responsible for the oxidation of Cu(+) to the less harmful Cu(2+) in the periplasm, thereby preventing Cu(+) from entering the cytoplasm. The sequence is that of Multicopper oxidase CueO (cueO) from Yersinia pestis.